The primary structure comprises 274 residues: tRNA pseudouridine synthase A (274 aa).

Residue D54 is the Nucleophile of the active site. Y112 contacts substrate.

It belongs to the tRNA pseudouridine synthase TruA family. In terms of assembly, homodimer.

It catalyses the reaction uridine(38/39/40) in tRNA = pseudouridine(38/39/40) in tRNA. Its function is as follows. Formation of pseudouridine at positions 38, 39 and 40 in the anticodon stem and loop of transfer RNAs. This is tRNA pseudouridine synthase A from Solidesulfovibrio magneticus (strain ATCC 700980 / DSM 13731 / RS-1) (Desulfovibrio magneticus).